The following is an 882-amino-acid chain: Cutinase transcription factor 1 beta (882 aa).

Over residues 1-20 (MNAETPEGSAAPPSPASTSA) the composition is skewed to low complexity. The segment at 1-49 (MNAETPEGSAAPPSPASTSAKTVTDKTNKKRASPSGDSEQPTKVTKRRA) is disordered. A DNA-binding region (zn(2)-C6 fungal-type) is located at residues 53 to 81 (CVSCRARKVRCDVVEGAPCGNCRWDNVEC). The disordered stretch occupies residues 117 to 148 (NPMGMSTADLRRPSSGSAISTSSIDGPSSFLS). Low complexity predominate over residues 130-139 (SSGSAISTSS).

It is found in the nucleus. The sequence is that of Cutinase transcription factor 1 beta (CTF1-BETA) from Fusarium vanettenii (Neocosmospora pisi).